Reading from the N-terminus, the 472-residue chain is WD repeat-containing protein 88 (472 aa).

Positions 1 to 22 (MASPPRCSPTAHDRECKLPPPS) are disordered. WD repeat units lie at residues 100 to 139 (GHEHAVSTCHFCVDDTKLLSGSYDCTVKLWDPVDGSVVRD), 143 to 182 (RPKAPVVECSITGDSSRVIAASYDKTVRAWDLETGKLLWK), 184 to 224 (RYDT…TVSV), 228 to 267 (HHTRSITSCCFDPDSQRVASVSLDRCIKIWDVTSQATLLT), 271 to 310 (AHSNAISNCCFTFSGHFLCTSSWDKNLKIWNVHTGEFRNC), 319 to 358 (GHEGSVSSCHFARDSSFLISGGFDRTVAIWDVAEGYRKLS), and 361 to 400 (GHNDWVMDVAISNNKKWILSASKDRTMRLWNIEEIDEIPL). A disordered region spans residues 447-472 (LPADTSSSSSSSERENSPPPRGSKDD). Residues 458-472 (SERENSPPPRGSKDD) show a composition bias toward basic and acidic residues.

The sequence is that of WD repeat-containing protein 88 (WDR88) from Homo sapiens (Human).